Here is a 257-residue protein sequence, read N- to C-terminus: Probable oxidoreductase yanE (257 aa).

It belongs to the oxidoreductase OpS7 family.

Its pathway is secondary metabolite biosynthesis; terpenoid biosynthesis. Functionally, part of the gene cluster that mediates the biosynthesis of yanuthone D, a fungal isoprenoid epoxycyclohexenone that acts as an antibiotic against fungi and bacteria. The first step of the pathway is the synthesis of 6-methylsalicylic acid (6-MSA) by the polyketide synthase yanA. 6-MSA is then converted to m-cresol by the decarboxylase yanB. The cytochrome P450 monooxygenase yanC then catalyzes the oxidation of m-cresol to toluquinol. Epoxidation of toluquinol is then performed by the short chain dehydrogenase yanD, with the help of yanE, and a further prenylation by yanG leads to 7-deacetoxyyanuthone A. The next step is the hydroxylation of C-22 of 7-deacetoxyyanuthone A by the cytochrome P450 monooxygenase yanH to yield 22-deacetylyanuthone A. O-Mevalon transferase yanI then attaches mevalon to the hydroxyl group of 22-deacetylyanuthone A to produce yanuthone E. Finally, the FAD-dependent monooxygenase yanF oxidizes the hydroxyl group at C15 of yanuthone E to form yanuthone D. Furthermore, several branching points in the pathway lead to the production of yanuthones F and G from 7-deacetoxyyanuthone A; yanuthones H and I from 22-deacetylyanuthone A; and yanuthone J from yanuthone E. YanE is also involved in the synthesis of yanuthone X1 which does not have 6-methylsalicylic acid (6-MSA) as precursor. The polypeptide is Probable oxidoreductase yanE (Aspergillus niger (strain ATCC 1015 / CBS 113.46 / FGSC A1144 / LSHB Ac4 / NCTC 3858a / NRRL 328 / USDA 3528.7)).